Reading from the N-terminus, the 159-residue chain is Ecotin (159 aa).

A signal peptide spans Met-1–Ala-22. Cys-68 and Cys-105 form a disulfide bridge.

This sequence belongs to the protease inhibitor I11 (ecotin) family. Homodimer.

The protein localises to the periplasm. Functionally, general inhibitor of family S1 serine proteases. The protein is Ecotin of Pseudomonas putida (strain GB-1).